A 153-amino-acid chain; its full sequence is Nucleoside diphosphate kinase (153 aa).

Ala-2 carries the post-translational modification N-acetylalanine. 6 residues coordinate ATP: Lys-13, Phe-61, Arg-89, Thr-95, Arg-106, and Asn-116. His-119 acts as the Pros-phosphohistidine intermediate in catalysis. A Phosphoserine modification is found at Ser-126.

Belongs to the NDK family. In terms of assembly, homohexamer. Requires Mg(2+) as cofactor.

It is found in the cytoplasm. Its subcellular location is the cytoskeleton. It catalyses the reaction a 2'-deoxyribonucleoside 5'-diphosphate + ATP = a 2'-deoxyribonucleoside 5'-triphosphate + ADP. The catalysed reaction is a ribonucleoside 5'-diphosphate + ATP = a ribonucleoside 5'-triphosphate + ADP. In terms of biological role, major role in the synthesis of nucleoside triphosphates other than ATP. The ATP gamma phosphate is transferred to the NDP beta phosphate via a ping-pong mechanism, using a phosphorylated active-site intermediate. The protein is Nucleoside diphosphate kinase (awd) of Drosophila melanogaster (Fruit fly).